The chain runs to 684 residues: DNA-directed RNA polymerase subunit beta' (684 aa).

Zn(2+) is bound by residues C69, C71, C87, and C90. Mg(2+) is bound by residues D489, D491, and D493.

It belongs to the RNA polymerase beta' chain family. RpoC1 subfamily. In plastids the minimal PEP RNA polymerase catalytic core is composed of four subunits: alpha, beta, beta', and beta''. When a (nuclear-encoded) sigma factor is associated with the core the holoenzyme is formed, which can initiate transcription. Requires Mg(2+) as cofactor. Zn(2+) serves as cofactor.

It localises to the plastid. The protein localises to the chloroplast. The catalysed reaction is RNA(n) + a ribonucleoside 5'-triphosphate = RNA(n+1) + diphosphate. Its function is as follows. DNA-dependent RNA polymerase catalyzes the transcription of DNA into RNA using the four ribonucleoside triphosphates as substrates. In Morus indica (Mulberry), this protein is DNA-directed RNA polymerase subunit beta'.